Reading from the N-terminus, the 185-residue chain is Prenylated Rab acceptor protein 1 (185 aa).

At 1 to 78 the chain is on the cytoplasmic side; sequence MAAQKDQQKD…RNVEYYQSNY (78 aa). The interval 30 to 54 is required for interaction with prenylated RAB3A and VAMP2; it reads AGREWLERRRATIRPWGTFVDQQRF. 2 helical membrane passes run 79 to 94 and 95 to 112; these read VFVF…VTSP and MLLV…ILYL. The Cytoplasmic segment spans residues 113–131; it reads RTLQSKLVLFGREVSPAHQ. Transmembrane regions (helical) follow at residues 132–148 and 149–165; these read YALA…LAGA and GSAV…LIGS. The tract at residues 165–185 is required for interaction with GDI1; sequence SHAAFHQMEPADGEELQMEPV. At 166-185 the chain is on the cytoplasmic side; it reads HAAFHQMEPADGEELQMEPV. Residues 175-185 are required for interaction with prenylated RAB3A and VAMP2; that stretch reads ADGEELQMEPV. Residues 175 to 185 form a homodimerization region; the sequence is ADGEELQMEPV.

It belongs to the PRA1 family. As to quaternary structure, homodimer. Interacts with VAMP2 (synaptobrevin-2), GDI1, NRDG1 and PCLO. Interacts with prenylated Rab proteins (including RAB5 and RAB6), and with the members of the Ras superfamily HRAS, RHOA, TC21, and RAP1A.

It localises to the cell membrane. The protein localises to the cytoplasm. Its subcellular location is the golgi apparatus. The protein resides in the cytoplasmic vesicle. It is found in the secretory vesicle. It localises to the synaptic vesicle. General Rab protein regulator required for vesicle formation from the Golgi complex. May control vesicle docking and fusion by mediating the action of Rab GTPases to the SNARE complexes. In addition it inhibits the removal of Rab GTPases from the membrane by GDI1. The polypeptide is Prenylated Rab acceptor protein 1 (Rabac1) (Mus musculus (Mouse)).